Consider the following 533-residue polypeptide: Undecaprenyl phosphate-alpha-4-amino-4-deoxy-L-arabinose arabinosyl transferase (533 aa).

The next 13 helical transmembrane spans lie at 10–30 (LLLA…GLWI), 64–84 (PAGY…LFGV), 86–106 (IASA…AGKI), 113–133 (SFAS…AGYS), 137–157 (PQFT…VHSI), 170–190 (VACG…PAII), 207–227 (FGPL…LAVH), 257–277 (WWFY…LLPV), 290–310 (DTAF…LSKG), 312–332 (LPTY…DALV), 345–365 (VNGI…IYVQ), 377–397 (HLLL…LQGI), and 402–422 (FWAL…AALP).

The protein belongs to the glycosyltransferase 83 family.

The protein resides in the cell inner membrane. The catalysed reaction is 4-amino-4-deoxy-alpha-L-arabinopyranosyl di-trans,octa-cis-undecaprenyl phosphate + lipid IVA = lipid IIA + di-trans,octa-cis-undecaprenyl phosphate.. Its pathway is lipopolysaccharide metabolism; 4-amino-4-deoxy-beta-L-arabinose-lipid A biosynthesis. Its function is as follows. Catalyzes the transfer of the L-Ara4N moiety of the glycolipid undecaprenyl phosphate-alpha-L-Ara4N to lipid A. The modified arabinose is attached to lipid A and is required for resistance to polymyxin and cationic antimicrobial peptides. In Pseudomonas savastanoi pv. phaseolicola (strain 1448A / Race 6) (Pseudomonas syringae pv. phaseolicola (strain 1448A / Race 6)), this protein is Undecaprenyl phosphate-alpha-4-amino-4-deoxy-L-arabinose arabinosyl transferase.